Reading from the N-terminus, the 1039-residue chain is L-arabinokinase (1039 aa).

The helical transmembrane segment at 662–678 (AAYVAGTILVLMIELGV) threads the bilayer. 693–703 (PEGKGVSSSAA) serves as a coordination point for ATP. The active-site Proton acceptor is Asp-745.

It belongs to the GHMP kinase family.

It localises to the membrane. The catalysed reaction is L-arabinose + ATP = beta-L-arabinose 1-phosphate + ADP + H(+). In terms of biological role, arabinose kinase. Involved in the salvage pathway which converts free L-arabinose to UDP-L-arabinose. May play a role in arabinose transport. The chain is L-arabinokinase (ARA1) from Arabidopsis thaliana (Mouse-ear cress).